A 356-amino-acid chain; its full sequence is Dynein regulatory complex protein 10 (356 aa).

Residues S126–Q167 adopt a coiled-coil conformation. Residues A173–D209 form a disordered region. Residues S178–S187 show a composition bias toward low complexity. Residues A197 to G287 adopt a coiled-coil conformation. The 30-residue stretch at Q319–E348 folds into the IQ domain.

The protein belongs to the DRC10 family. As to quaternary structure, component of the nexin-dynein regulatory complex (N-DRC).

Its subcellular location is the cytoplasm. The protein localises to the cytoskeleton. It localises to the flagellum axoneme. In terms of biological role, component of the nexin-dynein regulatory complex (N-DRC), a key regulator of ciliary/flagellar motility which maintains the alignment and integrity of the distal axoneme and regulates microtubule sliding in motile axonemes. This is Dynein regulatory complex protein 10 from Chlamydomonas reinhardtii (Chlamydomonas smithii).